We begin with the raw amino-acid sequence, 301 residues long: RNA polymerase II holoenzyme cyclin-like subunit (301 aa).

One can recognise a Cyclin N-terminal domain in the interval 53–142 (QQLIKLGKRM…LGECEFALIS (90 aa)).

The protein belongs to the cyclin family. Cyclin C subfamily. In terms of assembly, component of the srb8-11 complex, a regulatory module of the Mediator complex.

It is found in the nucleus. In terms of biological role, component of the srb8-11 complex. The srb8-11 complex is a regulatory module of the Mediator complex which is itself involved in regulation of basal and activated RNA polymerase II-dependent transcription. The srb8-11 complex may be involved in the transcriptional repression of a subset of genes regulated by Mediator. It may inhibit the association of the Mediator complex with RNA polymerase II to form the holoenzyme complex. The srb8-11 complex phosphorylates the C-terminal domain (CTD) of the largest subunit of RNA polymerase II. This Aspergillus oryzae (strain ATCC 42149 / RIB 40) (Yellow koji mold) protein is RNA polymerase II holoenzyme cyclin-like subunit (ssn8).